The primary structure comprises 308 residues: Aspartate carbamoyltransferase catalytic subunit (308 aa).

The carbamoyl phosphate site is built by Arg-59 and Thr-60. Position 87 (Lys-87) interacts with L-aspartate. The carbamoyl phosphate site is built by Arg-109, His-139, and Gln-142. Arg-172 and Arg-224 together coordinate L-aspartate. Carbamoyl phosphate-binding residues include Ala-265 and Pro-266.

It belongs to the aspartate/ornithine carbamoyltransferase superfamily. ATCase family. Heterododecamer (2C3:3R2) of six catalytic PyrB chains organized as two trimers (C3), and six regulatory PyrI chains organized as three dimers (R2).

The enzyme catalyses carbamoyl phosphate + L-aspartate = N-carbamoyl-L-aspartate + phosphate + H(+). The protein operates within pyrimidine metabolism; UMP biosynthesis via de novo pathway; (S)-dihydroorotate from bicarbonate: step 2/3. In terms of biological role, catalyzes the condensation of carbamoyl phosphate and aspartate to form carbamoyl aspartate and inorganic phosphate, the committed step in the de novo pyrimidine nucleotide biosynthesis pathway. This Enterococcus faecalis (strain ATCC 700802 / V583) protein is Aspartate carbamoyltransferase catalytic subunit.